Reading from the N-terminus, the 312-residue chain is Ribosomal protein L11 methyltransferase (312 aa).

S-adenosyl-L-methionine contacts are provided by Thr-162, Gly-183, Asp-205, and Asn-248.

This sequence belongs to the methyltransferase superfamily. PrmA family.

Its subcellular location is the cytoplasm. It catalyses the reaction L-lysyl-[protein] + 3 S-adenosyl-L-methionine = N(6),N(6),N(6)-trimethyl-L-lysyl-[protein] + 3 S-adenosyl-L-homocysteine + 3 H(+). In terms of biological role, methylates ribosomal protein L11. The protein is Ribosomal protein L11 methyltransferase of Geobacillus thermodenitrificans (strain NG80-2).